The following is a 220-amino-acid chain: Redox-sensing transcriptional repressor Rex (220 aa).

A DNA-binding region (H-T-H motif) is located at residues 25–64 (WYLSNVKLLKQRGERFVSSTQISKEINIDASQIAKDLSYV). 99–104 (GVGSLG) is a binding site for NAD(+).

This sequence belongs to the transcriptional regulatory Rex family. In terms of assembly, homodimer.

The protein resides in the cytoplasm. Modulates transcription in response to changes in cellular NADH/NAD(+) redox state. The sequence is that of Redox-sensing transcriptional repressor Rex from Bacteroides thetaiotaomicron (strain ATCC 29148 / DSM 2079 / JCM 5827 / CCUG 10774 / NCTC 10582 / VPI-5482 / E50).